We begin with the raw amino-acid sequence, 61 residues long: Insect toxin AaHIT5 (61 aa).

In terms of domain architecture, LCN-type CS-alpha/beta spans 1 to 61 (DGYIKRHDGC…AWKSETNTCD (61 aa)). 4 disulfides stabilise this stretch: Cys-10–Cys-60, Cys-14–Cys-35, Cys-21–Cys-42, and Cys-25–Cys-44.

Expressed by the venom gland.

It is found in the secreted. Excitatory insect toxins induce a spastic paralysis. They bind voltage-independently to sodium channels (Nav) and shift the voltage of activation toward more negative potentials thereby affecting sodium channel activation and promoting spontaneous and repetitive firing. This toxin elicits excitatory activity with no flaccid paralysis despite its high degree of sequence similarity with other depressant insect toxins. This toxin is active only on insects. The protein is Insect toxin AaHIT5 of Androctonus australis (Sahara scorpion).